Consider the following 396-residue polypeptide: Ribosomal RNA large subunit methyltransferase I (396 aa).

The PUA domain maps to 2 to 81; it reads TVRLILAKGR…EVIDCAFFIR (80 aa).

It belongs to the methyltransferase superfamily. RlmI family.

It localises to the cytoplasm. The catalysed reaction is cytidine(1962) in 23S rRNA + S-adenosyl-L-methionine = 5-methylcytidine(1962) in 23S rRNA + S-adenosyl-L-homocysteine + H(+). In terms of biological role, specifically methylates the cytosine at position 1962 (m5C1962) of 23S rRNA. The sequence is that of Ribosomal RNA large subunit methyltransferase I from Yersinia pseudotuberculosis serotype O:1b (strain IP 31758).